A 355-amino-acid polypeptide reads, in one-letter code: NADH-quinone oxidoreductase subunit H (355 aa).

8 helical membrane passes run 25–45 (LVRILVVAVVILLCVAYLILW), 91–111 (WLYLVAPVMTVVPAFAVWAVI), 126–146 (LLYAMAISSIGVYAVILAGWA), 170–190 (MGFALVLVLMTAGSLNLSEIV), 205–225 (FLSWNWLPLLPAFVVYFVSGI), 253–273 (MAFALFFLAEYINMIVISALA), 290–310 (FIPGIFWLVLKVFALLSVFIW), and 330–350 (VFLPVTVIWVVVVGFWMMSPL).

The protein belongs to the complex I subunit 1 family. NDH-1 is composed of 14 different subunits. Subunits NuoA, H, J, K, L, M, N constitute the membrane sector of the complex.

It is found in the cell inner membrane. The catalysed reaction is a quinone + NADH + 5 H(+)(in) = a quinol + NAD(+) + 4 H(+)(out). Functionally, NDH-1 shuttles electrons from NADH, via FMN and iron-sulfur (Fe-S) centers, to quinones in the respiratory chain. The immediate electron acceptor for the enzyme in this species is believed to be ubiquinone. Couples the redox reaction to proton translocation (for every two electrons transferred, four hydrogen ions are translocated across the cytoplasmic membrane), and thus conserves the redox energy in a proton gradient. This subunit may bind ubiquinone. In Burkholderia vietnamiensis (strain G4 / LMG 22486) (Burkholderia cepacia (strain R1808)), this protein is NADH-quinone oxidoreductase subunit H.